The sequence spans 279 residues: Ribosomal RNA small subunit methyltransferase A (279 aa).

S-adenosyl-L-methionine contacts are provided by asparagine 28, leucine 30, glycine 55, glutamate 77, aspartate 103, and asparagine 122.

It belongs to the class I-like SAM-binding methyltransferase superfamily. rRNA adenine N(6)-methyltransferase family. RsmA subfamily.

It is found in the cytoplasm. It carries out the reaction adenosine(1518)/adenosine(1519) in 16S rRNA + 4 S-adenosyl-L-methionine = N(6)-dimethyladenosine(1518)/N(6)-dimethyladenosine(1519) in 16S rRNA + 4 S-adenosyl-L-homocysteine + 4 H(+). Its function is as follows. Specifically dimethylates two adjacent adenosines (A1518 and A1519) in the loop of a conserved hairpin near the 3'-end of 16S rRNA in the 30S particle. May play a critical role in biogenesis of 30S subunits. The protein is Ribosomal RNA small subunit methyltransferase A of Ruegeria pomeroyi (strain ATCC 700808 / DSM 15171 / DSS-3) (Silicibacter pomeroyi).